The chain runs to 178 residues: CDP-archaeol synthase (178 aa).

Helical transmembrane passes span leucine 3–valine 23, phenylalanine 56–tyrosine 76, isoleucine 91–isoleucine 111, and leucine 136–isoleucine 156.

It belongs to the CDP-archaeol synthase family. Mg(2+) is required as a cofactor.

It localises to the cell membrane. It carries out the reaction 2,3-bis-O-(geranylgeranyl)-sn-glycerol 1-phosphate + CTP + H(+) = CDP-2,3-bis-O-(geranylgeranyl)-sn-glycerol + diphosphate. The protein operates within membrane lipid metabolism; glycerophospholipid metabolism. Catalyzes the formation of CDP-2,3-bis-(O-geranylgeranyl)-sn-glycerol (CDP-archaeol) from 2,3-bis-(O-geranylgeranyl)-sn-glycerol 1-phosphate (DGGGP) and CTP. This reaction is the third ether-bond-formation step in the biosynthesis of archaeal membrane lipids. This is CDP-archaeol synthase from Methanococcus maripaludis (strain C5 / ATCC BAA-1333).